Here is a 657-residue protein sequence, read N- to C-terminus: Broad substrate specificity ATP-binding cassette transporter ABCG2 (657 aa).

Positions 1–25 (MSSSNDHVLVPMSQRNKNGLPGMSS) are disordered. Residues 1 to 395 (MSSSNDHVLV…KNLLGNPQAS (395 aa)) lie on the Cytoplasmic side of the membrane. The ABC transporter domain maps to 48–285 (VKSGFLVRKT…FASAGYHCEP (238 aa)). ATP is bound by residues 79–86 (GPTGGGKS), 183–189 (RGISGGE), Glu-210, and His-242. The ABC transmembrane type-2 domain maps to 389-653 (LGNPQASVAQ…TIAYLKLLFL (265 aa)). A helical transmembrane segment spans residues 396–416 (VAQLIVTVILGLIIGALYFGL). At 417-428 (KNDPTGMQNRAG) the chain is on the extracellular side. Residues 429–449 (VFFFLTTNQCFTSVSAVELFV) traverse the membrane as a helical segment. The Cytoplasmic segment spans residues 450 to 477 (VEKKLFIHEYISGYYRVSSYFFGKLVSD). A helical membrane pass occupies residues 478 to 498 (LLPMRFLPSVIYTCILYFMLG). Over 499–506 (LKRTVEAF) the chain is Extracellular. The chain crosses the membrane as a helical span at residues 507-527 (FIMMFTLIMVAYTASSMALAI). Topologically, residues 528–535 (AAGQSVVS) are cytoplasmic. A helical transmembrane segment spans residues 536–556 (VATLLMTISFVFMMLFSGLLV). Over 557–632 (NLRTIGPWLS…LSPWGLWRNH (76 aa)) the chain is Extracellular. Residues Cys-592 and Cys-610 are joined by a disulfide bond. Residues Asn-596 and Asn-600 are each glycosylated (N-linked (GlcNAc...) asparagine). A helical membrane pass occupies residues 633–653 (VALACMIIIFLTIAYLKLLFL). The Cytoplasmic portion of the chain corresponds to 654–657 (KKYS).

This sequence belongs to the ABC transporter superfamily. ABCG family. Eye pigment precursor importer (TC 3.A.1.204) subfamily. In terms of assembly, homodimer; disulfide-linked. The minimal functional unit is a homodimer, but the major oligomeric form in plasma membrane is a homotetramer with possibility of higher order oligomerization up to homododecamers. Post-translationally, N-glycosylated in brain capillary, kidney and small intestine but not in heart. N-glycosylated. Glycosylation-deficient ABCG2 is normally expressed and functional. In terms of processing, phosphorylated. Phosphorylation may regulate the localization to the plasma membrane, the homooligomerization and therefore, the activity of the transporter. As to expression, highly expressed in brain capillary, kidney and small intestine. Lower expression in heart. Preferentially expressed (at protein level) on the luminal membrane of brain capillaries, in kidney and small intestine.

It localises to the cell membrane. The protein localises to the apical cell membrane. Its subcellular location is the mitochondrion membrane. It catalyses the reaction ATP + H2O + xenobioticSide 1 = ADP + phosphate + xenobioticSide 2.. It carries out the reaction urate(in) + ATP + H2O = urate(out) + ADP + phosphate + H(+). The catalysed reaction is indoxyl sulfate(in) + ATP + H2O = indoxyl sulfate(out) + ADP + phosphate + H(+). The enzyme catalyses sphing-4-enine 1-phosphate(in) + ATP + H2O = sphing-4-enine 1-phosphate(out) + ADP + phosphate + H(+). It catalyses the reaction estrone 3-sulfate(in) + ATP + H2O = estrone 3-sulfate(out) + ADP + phosphate + H(+). It carries out the reaction dehydroepiandrosterone 3-sulfate(in) + ATP + H2O = dehydroepiandrosterone 3-sulfate(out) + ADP + phosphate + H(+). The catalysed reaction is 4-methylumbelliferone sulfate(in) + ATP + H2O = 4-methylumbelliferone sulfate(out) + ADP + phosphate + H(+). The enzyme catalyses 5,7-dimethyl-2-methylamino-4-(3-pyridylmethyl)-1,3-benzothiazol-6-yl beta-D-glucuronate(in) + ATP + H2O = 5,7-dimethyl-2-methylamino-4-(3-pyridylmethyl)-1,3-benzothiazol-6-yl beta-D-glucuronate(out) + ADP + phosphate + H(+). It catalyses the reaction 4-methylumbelliferone beta-D-glucuronate(in) + ATP + H2O = 4-methylumbelliferone beta-D-glucuronate(out) + ADP + phosphate + H(+). It carries out the reaction 5,7-dimethyl-2-methylamino-4-(3-pyridylmethyl)-1,3-benzothiazol-6-yl sulfate(in) + ATP + H2O = 5,7-dimethyl-2-methylamino-4-(3-pyridylmethyl)-1,3-benzothiazol-6-yl sulfate(out) + ADP + phosphate + H(+). The catalysed reaction is 17beta-estradiol 17-O-(beta-D-glucuronate)(in) + ATP + H2O = 17beta-estradiol 17-O-(beta-D-glucuronate)(out) + ADP + phosphate + H(+). The enzyme catalyses methotrexate(in) + ATP + H2O = methotrexate(out) + ADP + phosphate + H(+). It catalyses the reaction riboflavin(in) + ATP + H2O = riboflavin(out) + ADP + phosphate + H(+). It carries out the reaction pheophorbide a(in) + ATP + H2O = pheophorbide a(out) + ADP + phosphate + H(+). The catalysed reaction is itaconate(in) + ATP + H2O = itaconate(out) + ADP + phosphate + H(+). In terms of biological role, broad substrate specificity ATP-dependent transporter of the ATP-binding cassette (ABC) family that actively extrudes a wide variety of physiological compounds, dietary toxins and xenobiotics from cells. Involved in porphyrin homeostasis, mediating the export of protoporphyrin IX (PPIX) from both mitochondria to cytosol and cytosol to extracellular space, it also functions in the cellular export of heme. Also mediates the efflux of sphingosine-1-P from cells. Acts as a urate exporter functioning in both renal and extrarenal urate excretion. In kidney, it also functions as a physiological exporter of the uremic toxin indoxyl sulfate. Also involved in the excretion of steroids like estrone 3-sulfate/E1S, 3beta-sulfooxy-androst-5-en-17-one/DHEAS, and other sulfate conjugates. Mediates the secretion of the riboflavin and biotin vitamins into milk. Extrudes pheophorbide a, a phototoxic porphyrin catabolite of chlorophyll, reducing its bioavailability. Plays an important role in the exclusion of xenobiotics from the brain. It confers to cells a resistance to multiple drugs and other xenobiotics including mitoxantrone, pheophorbide, camptothecin, methotrexate, azidothymidine, and the anthracyclines daunorubicin and doxorubicin, through the control of their efflux. In placenta, it limits the penetration of drugs from the maternal plasma into the fetus. May play a role in early stem cell self-renewal by blocking differentiation. In inflammatory macrophages, exports itaconate from the cytosol to the extracellular compartment and limits the activation of TFEB-dependent lysosome biogenesis involved in antibacterial innate immune response. The chain is Broad substrate specificity ATP-binding cassette transporter ABCG2 (Abcg2) from Rattus norvegicus (Rat).